A 202-amino-acid chain; its full sequence is Endothelin-1 (202 aa).

An N-terminal signal peptide occupies residues 1-25 (MDYFPMIFALLFVAFQGAPEAAVLG). The propeptide occupies 26 to 50 (TELSAGAEDGGEKPAPATPWRPRRS). 2 disulfides stabilise this stretch: Cys53-Cys67 and Cys55-Cys63. A propeptide spanning residues 74–202 (VNTPEHVVPY…DKKVIYNRAH (129 aa)) is cleaved from the precursor. An endothelin-like region spans residues 110-124 (CQCASQTDKKCWNFC).

It belongs to the endothelin/sarafotoxin family.

It is found in the secreted. Its function is as follows. Endothelins are endothelium-derived vasoconstrictor peptides. Probable ligand for G-protein coupled receptors EDNRA and EDNRB which activates PTK2B, BCAR1, BCAR3 and, GTPases RAP1 and RHOA cascade in glomerular mesangial cells. Also binds the DEAR/FBXW7-AS1 receptor. Promotes mesenteric arterial wall remodeling via activation of ROCK signaling and subsequent colocalization of NFATC3 with F-actin filaments. NFATC3 then translocates to the nucleus where it subsequently promotes the transcription of the smooth muscle hypertrophy and differentiation marker ACTA2. The protein is Endothelin-1 (EDN1) of Bos taurus (Bovine).